Consider the following 851-residue polypeptide: Protein NUD1 (851 aa).

Disordered regions lie at residues 1–31 (MDMD…NAHS) and 216–352 (LVGS…KAPS). The segment covering 8–21 (AELSSQLENLTINS) has biased composition (polar residues). Low complexity-rich tracts occupy residues 223-246 (NSNN…INNK) and 260-278 (SNSF…QTQS). A compositionally biased stretch (polar residues) spans 291-304 (NTISPGQLGYQFNH). Residues 320–333 (SSSHSLDNTSSNQS) show a composition bias toward low complexity. A Glycyl lysine isopeptide (Lys-Gly) (interchain with G-Cter in ubiquitin) cross-link involves residue K357. A phosphothreonine mark is found at T388 and T392. Residues S417 and S419 each carry the phosphoserine modification. 5 LRR repeats span residues 544–566 (DLEC…SLCH), 567–588 (HLQE…GSSR), 589–609 (MKKL…EQLI), 621–642 (TVEV…NCLP), and 643–664 (RLKV…SKME).

As to quaternary structure, interacts directly with MPC54, CNM67, SPO21/MPC70, ADY3 and ADY4. Probable component of a spindle pole boby (SPB) complex composed of ADY3, SSP1, DON1, MPC54, SPO21/MPC70, NUD1 and CNM67. Phosphorylated from S/G2 phase until the end of mitosis.

The protein resides in the cytoplasm. Its subcellular location is the cytoskeleton. The protein localises to the microtubule organizing center. It localises to the spindle pole body. It is found in the nucleus envelope. Involved in astral microtubule organization by binding SCP72 to the outer plaque in a cell-cycle dependent manner. Required for the mitotic exit by facilitating the binding of TEMP1 to CDC15. Also involved in the pathway that organizes the shaping and sizing of the prospore membrane (PSM) during sporulation. The polypeptide is Protein NUD1 (NUD1) (Saccharomyces cerevisiae (strain ATCC 204508 / S288c) (Baker's yeast)).